The chain runs to 644 residues: Transcription factor cep-1 (644 aa).

The DNA-binding element occupies 223–418; the sequence is EKWMEIDVLK…NFCEREDAKQ (196 aa). Residues Cys-307, His-310, Cys-361, and Cys-365 each coordinate Zn(2+). The interval 528–555 is required for tertiary structure stability of the protein; that stretch reads TNYSFRTLTLSTAEYTKVVEFLAREAKV.

The protein belongs to the p53 family. In terms of assembly, homodimer. Interacts (via C-terminus domain) with prmt-5; not methylated by prmt-5. Interacts with cbp-1 (via HAT domain); cep-1 transcriptional activity may be inhibited by interaction with methylated cbp-1. Component of a complex that contains prmt-5 and cbp-1. Interacts with ape-1; the interaction inhibits pro-apoptotic activity of cep-1. The cofactor is Zn(2+). Post-translationally, phosphorylated in response to IR-induced DNA damage which is thought to be mediated by akt-1. Expressed in pharyngeal muscle and neurons.

The protein resides in the nucleus. In terms of biological role, transcriptional activator that binds the same DNA consensus sequence as p53. Has a role in normal development to ensure proper meiotic chromosome segregation. Promotes apoptosis under conditions of cellular and genotoxic stress in response to DNA damage, hypoxia, or starvation. Regulates germline apoptosis in response to DNA damage. Its pro-apoptotic activity is inhibited when bound to ape-1 in vitro. Plays a role in cell cycle arrest in the germline in response to DNA damage by UV-C light. However, not required for survival in response to DNA damage induced by UV-C light, indicating that it is unlikely to be involved in DNA repair. Required for induction of ced-13 in response to DNA damage. Regulates DNA damage-induced apoptosis by inducing transcription of the programmed cell death activator egl-1. Regulates germline proliferation by activating phg-1. Modulates lifespan. This chain is Transcription factor cep-1, found in Caenorhabditis elegans.